The primary structure comprises 258 residues: Imidazole glycerol phosphate synthase subunit HisF (258 aa).

Active-site residues include D11 and D130.

It belongs to the HisA/HisF family. As to quaternary structure, heterodimer of HisH and HisF.

It localises to the cytoplasm. The catalysed reaction is 5-[(5-phospho-1-deoxy-D-ribulos-1-ylimino)methylamino]-1-(5-phospho-beta-D-ribosyl)imidazole-4-carboxamide + L-glutamine = D-erythro-1-(imidazol-4-yl)glycerol 3-phosphate + 5-amino-1-(5-phospho-beta-D-ribosyl)imidazole-4-carboxamide + L-glutamate + H(+). It functions in the pathway amino-acid biosynthesis; L-histidine biosynthesis; L-histidine from 5-phospho-alpha-D-ribose 1-diphosphate: step 5/9. IGPS catalyzes the conversion of PRFAR and glutamine to IGP, AICAR and glutamate. The HisF subunit catalyzes the cyclization activity that produces IGP and AICAR from PRFAR using the ammonia provided by the HisH subunit. In Yersinia pestis (strain Pestoides F), this protein is Imidazole glycerol phosphate synthase subunit HisF.